Reading from the N-terminus, the 365-residue chain is Chorismate synthase (365 aa).

R48 and R54 together coordinate NADP(+). Residues 125–127 (RAS), 237–238 (NA), G277, 292–296 (KPTSS), and R318 each bind FMN.

Belongs to the chorismate synthase family. Homotetramer. FMNH2 is required as a cofactor.

The enzyme catalyses 5-O-(1-carboxyvinyl)-3-phosphoshikimate = chorismate + phosphate. It participates in metabolic intermediate biosynthesis; chorismate biosynthesis; chorismate from D-erythrose 4-phosphate and phosphoenolpyruvate: step 7/7. Its function is as follows. Catalyzes the anti-1,4-elimination of the C-3 phosphate and the C-6 proR hydrogen from 5-enolpyruvylshikimate-3-phosphate (EPSP) to yield chorismate, which is the branch point compound that serves as the starting substrate for the three terminal pathways of aromatic amino acid biosynthesis. This reaction introduces a second double bond into the aromatic ring system. This Polaromonas sp. (strain JS666 / ATCC BAA-500) protein is Chorismate synthase.